Here is a 26-residue protein sequence, read N- to C-terminus: M-poneritoxin-Ng1d (26 aa).

As to expression, expressed by the venom gland.

The protein localises to the secreted. Its subcellular location is the target cell membrane. In terms of biological role, has a broad spectrum of activity against both Gram-positive and Gram-negative bacteria and S.cerevisiae. Has insecticidal and hemolytic activities. May act by disrupting the integrity of the bacterial cell membrane. The sequence is that of M-poneritoxin-Ng1d from Neoponera goeldii (Ponerine ant).